Reading from the N-terminus, the 297-residue chain is Acetyl-coenzyme A carboxylase carboxyl transferase subunit beta (297 aa).

The 270-residue stretch at 27-296 (LWHKCPSCEA…PEQAREAAAV (270 aa)) folds into the CoA carboxyltransferase N-terminal domain. Zn(2+) is bound by residues Cys31, Cys34, Cys50, and Cys53. The segment at 31 to 53 (CPSCEAVLYRPELEKTLDVCPKC) adopts a C4-type zinc-finger fold.

It belongs to the AccD/PCCB family. Acetyl-CoA carboxylase is a heterohexamer composed of biotin carboxyl carrier protein (AccB), biotin carboxylase (AccC) and two subunits each of ACCase subunit alpha (AccA) and ACCase subunit beta (AccD). Requires Zn(2+) as cofactor.

It localises to the cytoplasm. The catalysed reaction is N(6)-carboxybiotinyl-L-lysyl-[protein] + acetyl-CoA = N(6)-biotinyl-L-lysyl-[protein] + malonyl-CoA. Its pathway is lipid metabolism; malonyl-CoA biosynthesis; malonyl-CoA from acetyl-CoA: step 1/1. Component of the acetyl coenzyme A carboxylase (ACC) complex. Biotin carboxylase (BC) catalyzes the carboxylation of biotin on its carrier protein (BCCP) and then the CO(2) group is transferred by the transcarboxylase to acetyl-CoA to form malonyl-CoA. This Pseudomonas putida (strain GB-1) protein is Acetyl-coenzyme A carboxylase carboxyl transferase subunit beta.